Here is a 715-residue protein sequence, read N- to C-terminus: Polyribonucleotide nucleotidyltransferase (715 aa).

Mg(2+) is bound by residues Asp-485 and Asp-491. The 60-residue stretch at Pro-552–Ile-611 folds into the KH domain. The 69-residue stretch at Asn-621–Lys-689 folds into the S1 motif domain. The disordered stretch occupies residues Thr-695–Ile-715.

The protein belongs to the polyribonucleotide nucleotidyltransferase family. In terms of assembly, component of the RNA degradosome, which is a multiprotein complex involved in RNA processing and mRNA degradation. The cofactor is Mg(2+).

The protein resides in the cytoplasm. It catalyses the reaction RNA(n+1) + phosphate = RNA(n) + a ribonucleoside 5'-diphosphate. Involved in mRNA degradation. Catalyzes the phosphorolysis of single-stranded polyribonucleotides processively in the 3'- to 5'-direction. This chain is Polyribonucleotide nucleotidyltransferase, found in Actinobacillus pleuropneumoniae serotype 3 (strain JL03).